A 725-amino-acid chain; its full sequence is Putative oligopeptide transporter YGL114W (725 aa).

9 consecutive transmembrane segments (helical) span residues Ala28 to Leu48, Phe134 to Pro154, Ile254 to Val274, Trp353 to Val373, Ile449 to Ile469, Ile472 to Ile492, Phe564 to Cys584, Tyr644 to Asn664, and Ile697 to Phe717.

It belongs to the oligopeptide OPT transporter family.

The protein localises to the membrane. In Saccharomyces cerevisiae (strain ATCC 204508 / S288c) (Baker's yeast), this protein is Putative oligopeptide transporter YGL114W.